Consider the following 231-residue polypeptide: uncharacterized protein (231 aa).

10–34 serves as a coordination point for NADP(+); sequence VVTGAGSGIGEAIATLLHEEGAKVV. Ser140 contributes to the substrate binding site. The active-site Proton acceptor is the Tyr153.

It belongs to the short-chain dehydrogenases/reductases (SDR) family.

This is an uncharacterized protein from Staphylococcus aureus (strain COL).